The chain runs to 513 residues: Cobyric acid synthase (513 aa).

Positions 270 to 470 constitute a GATase cobBQ-type domain; that stretch reads RLRIAIVAYP…THGLFESPAV (201 aa). The active-site Nucleophile is Cys351. His462 is a catalytic residue.

This sequence belongs to the CobB/CobQ family. CobQ subfamily.

It participates in cofactor biosynthesis; adenosylcobalamin biosynthesis. Its function is as follows. Catalyzes amidations at positions B, D, E, and G on adenosylcobyrinic A,C-diamide. NH(2) groups are provided by glutamine, and one molecule of ATP is hydrogenolyzed for each amidation. The chain is Cobyric acid synthase from Leptothrix cholodnii (strain ATCC 51168 / LMG 8142 / SP-6) (Leptothrix discophora (strain SP-6)).